Reading from the N-terminus, the 324-residue chain is Polyprenol dehydrogenase (324 aa).

Catalysis depends on tyrosine 206, which acts as the Proton acceptor. The NAD(+) site is built by tyrosine 206, lysine 210, and threonine 243.

It belongs to the short-chain dehydrogenases/reductases (SDR) family.

Its subcellular location is the lipid droplet. The enzyme catalyses a di-trans,poly-cis-polyprenol + NAD(+) = a di-trans,poly-cis-polyprenal + NADH + H(+). It carries out the reaction a di-trans,poly-cis-polyprenol + NADP(+) = a di-trans,poly-cis-polyprenal + NADPH + H(+). It catalyses the reaction a di-trans,poly-cis-dolichol + NADP(+) = a di-trans,poly-cis-dolichal + NADPH + H(+). The catalysed reaction is a di-trans,poly-cis-dolichol + NAD(+) = a di-trans,poly-cis-dolichal + NADH + H(+). The protein operates within protein modification; protein glycosylation. Its function is as follows. Oxidoreductase that plays a key role in early steps of protein N-linked glycosylation by mediating two non-consecutive steps in dolichol biosynthesis. Acts both as a NAD(+)-dependent dehydrogenase and as a NADPH-dependent reductase during the conversion of polyprenol into dolichol. First catalyzes the NAD(+)-dependent dehydrogenation of polyprenol into polyprenal; polyprenal is then reduced into dolichal by srd5a3. It then catalyzes the NADPH-dependent reduction of dolichal into dolichol. This chain is Polyprenol dehydrogenase, found in Danio rerio (Zebrafish).